Here is a 454-residue protein sequence, read N- to C-terminus: uncharacterized protein (454 aa).

Residues Cys73, Cys79, Cys82, and Cys154 each contribute to the [4Fe-4S] cluster site. The S-adenosyl-L-methionine site is built by Gln279, Phe307, Asp328, and Asp381. Residue Cys408 is the Nucleophile of the active site.

The protein belongs to the class I-like SAM-binding methyltransferase superfamily. RNA M5U methyltransferase family.

This is an uncharacterized protein from Leptospira interrogans serogroup Icterohaemorrhagiae serovar Lai (strain 56601).